Here is a 351-residue protein sequence, read N- to C-terminus: CCN family member 3 (351 aa).

The N-terminal stretch at 1 to 24 (METGGGQGLPVLLLLLLLLRPCEV) is a signal peptide. One can recognise an IGFBP N-terminal domain in the interval 27 to 101 (REAACPRPCG…GGGAGICMVL (75 aa)). 6 disulfides stabilise this stretch: C31–C57, C35–C59, C39–C60, C46–C63, C71–C85, and C77–C98. The region spanning 104–170 (DNCVFDGMIY…GECCEKWVCD (67 aa)) is the VWFC domain. One can recognise a TSP type-1 domain in the interval 201–246 (NCIEQTTEWSACSKSCGMGFSTRVTNRNQQCEMVKQTRLCMMRPCE). Intrachain disulfides connect C258-C295, C275-C309, C286-C325, C289-C327, and C294-C331. Residues 258-332 (CIQTKKSMKA…NTCVCHGNCP (75 aa)) enclose the CTCK domain. N274 is a glycosylation site (N-linked (GlcNAc...) asparagine).

Belongs to the CCN family. Brain and heart, and at a lower level in muscle and intestine, in the embryo. Lung and less so in brain and spleen, in adult chicken.

It localises to the secreted. Its subcellular location is the cytoplasm. It is found in the cell junction. The protein resides in the gap junction. In terms of biological role, immediate-early protein likely to play a role in cell growth regulation. Its overexpression is associated with tumorigenesis and expression of a N-terminal-truncated version of CCN3 gene in chicken embryonic fibroblasts (CEF) is sufficient to induce the transformation of CEF in vitro. The polypeptide is CCN family member 3 (CCN3) (Gallus gallus (Chicken)).